Reading from the N-terminus, the 166-residue chain is Large ribosomal subunit protein uL10 (166 aa).

Belongs to the universal ribosomal protein uL10 family. Part of the ribosomal stalk of the 50S ribosomal subunit. The N-terminus interacts with L11 and the large rRNA to form the base of the stalk. The C-terminus forms an elongated spine to which L12 dimers bind in a sequential fashion forming a multimeric L10(L12)X complex.

Functionally, forms part of the ribosomal stalk, playing a central role in the interaction of the ribosome with GTP-bound translation factors. The protein is Large ribosomal subunit protein uL10 of Aeromonas hydrophila subsp. hydrophila (strain ATCC 7966 / DSM 30187 / BCRC 13018 / CCUG 14551 / JCM 1027 / KCTC 2358 / NCIMB 9240 / NCTC 8049).